Here is a 64-residue protein sequence, read N- to C-terminus: Outer envelope membrane protein 7 (64 aa).

Residues 1 to 11 (MGKTSGAKQAT) lie on the Chloroplast intermembrane side of the membrane. The chain crosses the membrane as a helical span at residues 12 to 32 (VVVAAMALGWLAIEIAFKPFL). The AKR2A-binding sequence (ABS) required for chloroplast outer envelope membrane targeting signature appears at 29–35 (KPFLDKF). At 33 to 64 (DKFRSSIDKSDPTKDPDDFDTAATATTSKEGL) the chain is on the cytoplasmic side. The span at 39 to 48 (IDKSDPTKDP) shows a compositional bias: basic and acidic residues. A disordered region spans residues 39–64 (IDKSDPTKDPDDFDTAATATTSKEGL). The span at 53–64 (TAATATTSKEGL) shows a compositional bias: low complexity.

In terms of assembly, interacts with AKR2A. Confined to green tissues.

It is found in the plastid. The protein resides in the chloroplast outer membrane. This Arabidopsis thaliana (Mouse-ear cress) protein is Outer envelope membrane protein 7.